A 467-amino-acid polypeptide reads, in one-letter code: Glycogen synthase (467 aa).

Lys16 is a binding site for ADP-alpha-D-glucose.

It belongs to the glycosyltransferase 1 family. Bacterial/plant glycogen synthase subfamily.

The enzyme catalyses [(1-&gt;4)-alpha-D-glucosyl](n) + ADP-alpha-D-glucose = [(1-&gt;4)-alpha-D-glucosyl](n+1) + ADP + H(+). The protein operates within glycan biosynthesis; glycogen biosynthesis. Functionally, synthesizes alpha-1,4-glucan chains using ADP-glucose. The sequence is that of Glycogen synthase from Paracoccus denitrificans (strain Pd 1222).